A 234-amino-acid chain; its full sequence is DNA repair protein RecO (234 aa).

Belongs to the RecO family.

Functionally, involved in DNA repair and RecF pathway recombination. This Halorhodospira halophila (strain DSM 244 / SL1) (Ectothiorhodospira halophila (strain DSM 244 / SL1)) protein is DNA repair protein RecO.